We begin with the raw amino-acid sequence, 278 residues long: Undecaprenyl-diphosphatase 1 (278 aa).

Helical transmembrane passes span 45–65, 95–115, 119–139, 191–211, 225–245, and 256–276; these read AVIGFSAVIQVGAIAAVLVYF, WWVIYATIPIVLVGLAAKPLI, LASLWVVAGSLIVGSGVMWWA, VAATRLSFFLGIPALTGAGLY, PLAVGTLVSFVVAYASIAWLL, and FVVYRIAVGVLLFGLLGTGVL.

This sequence belongs to the UppP family.

It localises to the cell membrane. It catalyses the reaction di-trans,octa-cis-undecaprenyl diphosphate + H2O = di-trans,octa-cis-undecaprenyl phosphate + phosphate + H(+). Its function is as follows. Catalyzes the dephosphorylation of undecaprenyl diphosphate (UPP). Confers resistance to bacitracin. The sequence is that of Undecaprenyl-diphosphatase 1 from Streptomyces coelicolor (strain ATCC BAA-471 / A3(2) / M145).